Reading from the N-terminus, the 676-residue chain is Head-specific guanylate cyclase (676 aa).

The 128-residue stretch at 466–593 (TILFSDIVGF…HSVTIANKFE (128 aa)) folds into the Guanylate cyclase domain.

It belongs to the adenylyl cyclase class-4/guanylyl cyclase family. In terms of assembly, heterodimer. In terms of tissue distribution, head, where it is preferentially expressed in the CNS and the retina. Not found in bodies.

The protein localises to the cytoplasm. It carries out the reaction GTP = 3',5'-cyclic GMP + diphosphate. In terms of biological role, may have a role in phototransduction. Catalyzes the conversion of GTP to cGMP, a common second messenger that is utilized in a wide variety of cells and signal transduction pathways. A second subunit is required for enzyme activity. The chain is Head-specific guanylate cyclase (Gycalpha99B) from Drosophila melanogaster (Fruit fly).